We begin with the raw amino-acid sequence, 207 residues long: Ras-related protein Rab-8A (207 aa).

GTP contacts are provided by serine 17, glycine 18, valine 19, glycine 20, lysine 21, threonine 22, cysteine 23, serine 35, serine 39, and threonine 40. Threonine 22 is a Mg(2+) binding site. Short sequence motifs (switch) lie at residues 31 to 45 (DAFN…GIDF) and 63 to 80 (DTAG…YYRG). Mg(2+) is bound by residues threonine 40 and aspartate 63. GTP is bound at residue glycine 66. Phosphothreonine is present on threonine 72. GTP-binding residues include asparagine 121, lysine 122, aspartate 124, alanine 152, and lysine 153. Phosphoserine occurs at positions 181 and 185. A Cysteine methyl ester modification is found at cysteine 204. The S-geranylgeranyl cysteine moiety is linked to residue cysteine 204. Residues 205 to 207 (VLL) constitute a propeptide, removed in mature form.

It belongs to the small GTPase superfamily. Rab family. As to quaternary structure, interacts (GTP-bound form) with MICALL1; regulates RAB8A association with recycling endosomes. Interacts with MICALL2; competes with RAB13 and is involved in E-cadherin endocytic recycling. Interacts (GTP-bound form) with MICAL1, MICALCL, MICAL3, EHBP1 and EHBP1L1; at least in case of MICAL1, MICALCL, MICAL3 and EHBP1L1 two molecules of RAB8A can bind to one molecule of the effector protein; ternary complexes of RAB8A, RAB13 and either MICAL1 or EHBP1L1 are possible. Interacts with EHD1. Interacts with MAP4K2 and SYTL4. Interacts with SGSM1 and SGSM3. Interacts with RABIF, RIMS2, RPH3A and RPH3A. Interacts with OPTN. Interacts with RAB3IP, RAB3IP functions as guanine exchange factor (GEF). Interacts with MYO5B. Interacts with CIMAP3. Interacts with BIRC6/bruce. Interacts with OCRL. Interacts with AHI1. Interacts with DCDC1. Interacts with LRRK2; interaction facilitates phosphorylation of Thr-72. Interacts with RAB31P, GDI1, GDI2, CHM, CHML, RABGGTA, RABGGTB, TBC1D15 and INPP5B; these interactions are dependent on Thr-72 not being phosphorylated. Interacts with RILPL1 and RILPL2; these interactions are dependent on the phosphorylation of Thr-72 by LRRK2. Interacts with DZIP1; prevents inhibition by the GDP-dissociation inhibitor GDI2. Interacts (in GDP-bound form) with RAB3IP/Rabin8, RAB3IP functions as guanine exchange factor (GEF) towards RAB8A. Interacts (in GDP-bound form) with RPGR, RPGR functions as GEF towards RAB8A. The cofactor is Mg(2+). Phosphorylation of Thr-72 in the switch II region by LRRK2 prevents the association of RAB regulatory proteins, including CHM, CHML and RAB GDP dissociation inhibitors GDI1 and GDI2. Phosphorylation by LRRK2 is required for localization to stressed lysosomes.

The protein resides in the cell membrane. It is found in the golgi apparatus. Its subcellular location is the endosome membrane. The protein localises to the recycling endosome membrane. It localises to the cell projection. The protein resides in the cilium. It is found in the cytoplasmic vesicle. Its subcellular location is the phagosome membrane. The protein localises to the cytoplasm. It localises to the cytoskeleton. The protein resides in the microtubule organizing center. It is found in the centrosome. Its subcellular location is the centriole. The protein localises to the cilium basal body. It localises to the midbody. The protein resides in the lysosome. It catalyses the reaction GTP + H2O = GDP + phosphate + H(+). With respect to regulation, regulated by guanine nucleotide exchange factors (GEFs) such as RAB3IP/Rabin8 and RPGR which promote the exchange of bound GDP for free GTP, GTPase activating proteins (GAPs) which increase the GTP hydrolysis activity, and GDP dissociation inhibitors (GDIs) which inhibit the dissociation of the nucleotide from the GTPase. Activated in response to insulin. Functionally, the small GTPases Rab are key regulators of intracellular membrane trafficking, from the formation of transport vesicles to their fusion with membranes. Rabs cycle between an inactive GDP-bound form and an active GTP-bound form that is able to recruit to membranes different sets of downstream effectors directly responsible for vesicle formation, movement, tethering and fusion. RAB8A is involved in polarized vesicular trafficking and neurotransmitter release. Together with RAB11A, RAB3IP, the exocyst complex, PARD3, PRKCI, ANXA2, CDC42 and DNMBP promotes transcytosis of PODXL to the apical membrane initiation sites (AMIS), apical surface formation and lumenogenesis. Regulates the compacted morphology of the Golgi. Together with MYO5B and RAB11A participates in epithelial cell polarization. Also involved in membrane trafficking to the cilium and ciliogenesis. Together with MICALL2, may also regulate adherens junction assembly. May play a role in insulin-induced transport to the plasma membrane of the glucose transporter GLUT4 and therefore play a role in glucose homeostasis. Involved in autophagy. Participates in the export of a subset of neosynthesized proteins through a Rab8-Rab10-Rab11-dependent endososomal export route. Targeted to and stabilized on stressed lysosomes through LRRK2 phosphorylation. Suppresses stress-induced lysosomal enlargement through EHBP1 and EHNP1L1 effector proteins. The polypeptide is Ras-related protein Rab-8A (RAB8A) (Canis lupus familiaris (Dog)).